The sequence spans 312 residues: Non-structural protein 12A (312 aa).

Positions 1-23 (MFKSGSGSLKRSGSISSVKSFSG) are enriched in low complexity. Disordered stretches follow at residues 1 to 37 (MFKSGSGSLKRSGSISSVKSFSGDSEKGLPPISRGSV), 62 to 97 (FVPEKTKSEGNLKNKSSVITGNFGSSGPTNAHYNQN), and 112 to 159 (SSKG…SHGT). A compositionally biased stretch (basic and acidic residues) spans 63-73 (VPEKTKSEGNL). The span at 74 to 97 (KNKSSVITGNFGSSGPTNAHYNQN) shows a compositional bias: polar residues. Residues 122-134 (DARHTATDSRLSQ) are compositionally biased toward basic and acidic residues. A compositionally biased stretch (polar residues) spans 135 to 154 (EVKQPFSEENASGNDLNTGR).

Belongs to the phytoreovirus non-structural protein Pns12A family.

The protein localises to the host cytoplasm. Its function is as follows. Constituent of viral factories. This chain is Non-structural protein 12A, found in Rice dwarf virus (isolate O) (RDV).